We begin with the raw amino-acid sequence, 118 residues long: Large ribosomal subunit protein bL20 (118 aa).

This sequence belongs to the bacterial ribosomal protein bL20 family.

In terms of biological role, binds directly to 23S ribosomal RNA and is necessary for the in vitro assembly process of the 50S ribosomal subunit. It is not involved in the protein synthesizing functions of that subunit. In Pseudomonas entomophila (strain L48), this protein is Large ribosomal subunit protein bL20.